Consider the following 89-residue polypeptide: Large ribosomal subunit protein uL23c (89 aa).

The protein belongs to the universal ribosomal protein uL23 family. Part of the 50S ribosomal subunit.

The protein resides in the plastid. It is found in the chloroplast. Its function is as follows. Binds to 23S rRNA. The protein is Large ribosomal subunit protein uL23c (rpl23) of Staurastrum punctulatum (Green alga).